We begin with the raw amino-acid sequence, 430 residues long: Probable carboxypeptidase AFLA_037450 (430 aa).

The first 16 residues, 1–16 (MKSIYSLVLCTALTAA), serve as a signal peptide directing secretion. Residue asparagine 84 is glycosylated (N-linked (GlcNAc...) asparagine). Aspartate 156 contributes to the Zn(2+) binding site. Glutamate 188 acts as the Proton acceptor in catalysis. Glutamate 189 provides a ligand contact to Zn(2+). N-linked (GlcNAc...) asparagine glycosylation is present at asparagine 285.

The protein belongs to the peptidase M20A family. The cofactor is Zn(2+).

It is found in the secreted. The sequence is that of Probable carboxypeptidase AFLA_037450 from Aspergillus flavus (strain ATCC 200026 / FGSC A1120 / IAM 13836 / NRRL 3357 / JCM 12722 / SRRC 167).